The following is a 307-amino-acid chain: Putative transcription factor bHLH086 (307 aa).

Disordered stretches follow at residues 1–49 and 167–215; these read MSLI…DHQN and HEST…QSLA. Polar residues-rich tracts occupy residues 12–28 and 183–197; these read NYIS…SPQN and GENT…SGTN. Residues 207-220 form a basic motif region; the sequence is SPKDPQSLAAKNRR. The 50-residue stretch at 207 to 256 folds into the bHLH domain; it reads SPKDPQSLAAKNRRERISERLKVLQELVPNGTKVDLVTMLEKAIGYVKFL. The tract at residues 221-256 is helix-loop-helix motif; the sequence is ERISERLKVLQELVPNGTKVDLVTMLEKAIGYVKFL.

In terms of assembly, homodimer. Forms heterodimers with RHD6. Interacts with TIFY10B/JAZ2, TIFY6A/JAZ4, TIFY5A/JAZ8, TIFY7/JAZ9 and TIFY9/JAZ10.

It is found in the nucleus. Functionally, transcription factor that is specifically required for the development of root hairs. Acts with RHD6 to positively regulate root hair development. Acts downstream of genes that regulate epidermal pattern formation, such as GL2. Acts with RHD6 as transcription factor that integrates a jasmonate (JA) signaling pathway that stimulates root hair growth. The sequence is that of Putative transcription factor bHLH086 from Arabidopsis thaliana (Mouse-ear cress).